The following is an 808-amino-acid chain: Aminotransferase ALT4 (808 aa).

This sequence belongs to the class-II pyridoxal-phosphate-dependent aminotransferase family. BioF subfamily. It depends on pyridoxal 5'-phosphate as a cofactor.

Its pathway is mycotoxin biosynthesis. Aminotransferase; part of the gene cluster that mediates the biosynthesis of the host-selective toxins (HSTs) AAL-toxins, sphinganine-analog mycotoxins responsible for Alternaria stem canker on tomato by the tomato pathotype. The biosynthesis starts with the polyketide synthase ALT1-catalyzed C-16 carbon chain assembly from one starter acetyl-CoA unit with malonyl-CoA extender units. ALT1 also selectively transfers methyl groups at the first and the third cycle of chain elongation for AAL toxin. The C-16 polyketide chain is released from the enzyme by a nucleophilic attack of a carbanion, which is derived from R-carbon of glycin by decarboxylation, on the carbonyl carbon of polyketide acyl chain. This step is probably catalyzed by a pyridoxal 5'-phosphate-dependent aminoacyl transferase ALT4. The respective functions of the other enzymes encoded by the cluster have still to be elucidated. The sphingosine N-acyltransferase-like protein ALT7 seems not to act as a resistance/self-tolerance factor against the toxin in the toxin biosynthetic gene cluster, contrary to what is expected. The polypeptide is Aminotransferase ALT4 (Alternaria alternata (Alternaria rot fungus)).